Here is a 569-residue protein sequence, read N- to C-terminus: Urease subunit beta (569 aa).

Residues 131–569 (GGIDTHIHFI…VSLAQLFSIF (439 aa)) enclose the Urease domain. Residues histidine 136, histidine 138, and lysine 219 each contribute to the Ni(2+) site. Position 219 is an N6-carboxylysine (lysine 219). Histidine 221 serves as a coordination point for substrate. Residues histidine 248 and histidine 274 each coordinate Ni(2+). The active-site Proton donor is histidine 322. Aspartate 362 serves as a coordination point for Ni(2+).

Belongs to the metallo-dependent hydrolases superfamily. Urease alpha subunit family. In terms of assembly, heterohexamer of 3 UreA (alpha) and 3 UreB (beta) subunits. It depends on Ni cation as a cofactor. Post-translationally, carboxylation allows a single lysine to coordinate two nickel ions.

It localises to the cytoplasm. It carries out the reaction urea + 2 H2O + H(+) = hydrogencarbonate + 2 NH4(+). It participates in nitrogen metabolism; urea degradation; CO(2) and NH(3) from urea (urease route): step 1/1. This Helicobacter pylori (strain HPAG1) protein is Urease subunit beta.